A 220-amino-acid polypeptide reads, in one-letter code: Ribose-5-phosphate isomerase A (220 aa).

Substrate is bound by residues 28 to 31, 81 to 84, and 94 to 97; these read TGST, DGAD, and KGGG. E103 acts as the Proton acceptor in catalysis. K121 contacts substrate.

Belongs to the ribose 5-phosphate isomerase family. Homodimer.

The enzyme catalyses aldehydo-D-ribose 5-phosphate = D-ribulose 5-phosphate. It participates in carbohydrate degradation; pentose phosphate pathway; D-ribose 5-phosphate from D-ribulose 5-phosphate (non-oxidative stage): step 1/1. Catalyzes the reversible conversion of ribose-5-phosphate to ribulose 5-phosphate. In Shewanella sp. (strain W3-18-1), this protein is Ribose-5-phosphate isomerase A.